The sequence spans 2725 residues: MEQTDCKPYQPLPKVKHEMDLAYTSSSDESEDGRKPRQSYNSRETLHEYNQELRMNYNSQSRKRKEVEKSTQEMEFCETSHTLCSGYQTDMHSVSRHGYQLEMGSDVDTETEGAASPDHALRMWIRGMKSEHSSCLSSRANSALSLTDTDHERKSDGENGFKFSPVCCDMEAQAGSTQDVQSSPHNQFTFRPLPPPPPPPHACTCARKPPPAADSLQRRSMTTRSQPSPAAPAPPTSTQDSVHLHNSWVLNSNIPLETRHFLFKHGSGSSAIFSAASQNYPLTSNTVYSPPPRPLPRSTFSRPAFTFNKPYRCCNWKCTALSATAITVTLALLLAYVIAVHLFGLTWQLQPVEGELYANGVSKGNRGTESMDTTYSPIGGKVSDKSEKKVFQKGRAIDTGEVDIGAQVMQTIPPGLFWRFQITIHHPIYLKFNISLAKDSLLGIYGRRNIPPTHTQFDFVKLMDGKQLVKQDSKGSDDTQHSPRNLILTSLQETGFIEYMDQGPWYLAFYNDGKKMEQVFVLTTAIEIMDDCSTNCNGNGECISGHCHCFPGFLGPDCARDSCPVLCGGNGEYEKGHCVCRHGWKGPECDVPEEQCIDPTCFGHGTCIMGVCICVPGYKGEICEEEDCLDPMCSNHGICVKGECHCSTGWGGVNCETPLPVCQEQCSGHGTFLLDAGVCSCDPKWTGSDCSTELCTMECGSHGVCSRGICQCEEGWVGPTCEERSCHSHCTEHGQCKDGKCECSPGWEGDHCTIAHYLDAVRDGCPGLCFGNGRCTLDQNGWHCVCQVGWSGTGCNVVMEMLCGDNLDNDGDGLTDCVDPDCCQQSNCYISPLCQGSPDPLDLIQQSQTLFSQHTSRLFYDRIKFLIGKDSTHVIPPEVSFDSRRACVIRGQVVAIDGTPLVGVNVSFLHHSDYGFTISRQDGSFDLVAIGGISVILIFDRSPFLPEKRTLWLPWNQFIVVEKVTMQRVVSDPPSCDISNFISPNPIVLPSPLTSFGGSCPERGTIVPELQVVQEEIPIPSSFVRLSYLSSRTPGYKTLLRILLTHSTIPVGMIKVHLTVAVEGRLTQKWFPAAINLVYTFAWNKTDIYGQKVWGLAEALVSVGYEYETCPDFILWEQRTVVLQGFEMDASNLGGWSLNKHHILNPQSGIIHKGNGENMFISQQPPVISTIMGNGHQRSVACTNCNGPAHNNKLFAPVALASGPDGSVYVGDFNFVRRIFPSGNSVSILELSTSPAHKYYLAMDPVSESLYLSDTNTRKVYKLKSLVETKDLSKNFEVVAGTGDQCLPFDQSHCGDGGRASEASLNSPRGITVDRHGFIYFVDGTMIRKIDENAVITTVIGSNGLTSTQPLSCDSGMDITQVRLEWPTDLAVNPMDNSLYVLDNNIVLQISENRRVRIIAGRPIHCQVPGIDHFLVSKVAIHSTLESARAISVSHSGLLFIAETDERKVNRIQQVTTNGEIYIIAGAPTDCDCKIDPNCDCFSGDGGYAKDAKMKAPSSLAVSPDGTLYVADLGNVRIRTISRNQAHLNDMNIYEIASPADQELYQFTVNGTHLHTLNLITRDYVYNFTYNSEGDLGAITSSNGNSVHIRRDAGGMPLWLVVPGGQVYWLTISSNGVLKRVSAQGYNLALMTYPGNTGLLATKSNENGWTTVYEYDPEGHLTNATFPTGEVSSFHSDLEKLTKVELDTSNRENVLMSTNLTATSTIYILKQENTQSTYRVNPDGSLRVTFASGMEIGLSSEPHILAGAVNPTLGKCNISLPGEHNANLIEWRQRKEQNKGNVSAFERRLRAHNRNLLSIDFDHITRTGKIYDDHRKFTLRILYDQTGRPILWSPVSRYNEVNITYSPSGLVTFIQRGTWNEKMEYDQSGKIISRTWADGKIWSYTYLEKSVMLLLHSQRRYIFEYDQPDCLLSVTMPSMVRHSLQTMLSVGYYRNIYTPPDSSTSFIQDYSRDGRLLQTLHLGTGRRVLYKYTKQARLSEVLYDTTQVTLTYEESSGVIKTIHLMHDGFICTIRYRQTGPLIGRQIFRFSEEGLVNARFDYSYNNFRVTSMQAVINETPLPIDLYRYVDVSGRTEQFGKFSVINYDLNQVITTTVMKHTKIFSANGQVIEVQYEILKAIAYWMTIQYDNVGRMVICDIRVGVDANITRYFYEYDADGQLQTVSVNDKTQWRYSYDLNGNINLLSHGKSARLTPLRYDLRDRITRLGEIQYKMDEDGFLRQRGNDIFEYNSNGLLQKAYNKASGWTVQYYYDGLGRRVASKSSLGQHLQFFYADLTNPIRVTHLYNHTSSEITSLYYDLQGHLIAMELSSGEEYYVACDNTGTPLAVFSSRGQVIKEILYTPYGDIYHDTYPDFQVIIGFHGGLYDFLTKLVHLGQRDYDVVAGRWTTPNHHIWKQLNLLPKPFNLYSFENNYPVGKIQDVAKYTTDIRSWLELFGFQLHNVLPGFPKPELENLELTYELLRLQTKTQEWDPGKTILGIQCELQKQLRNFISLDQLPMTPRYNDGRCLEGGKQPRFAAVPSVFGKGIKFAIKDGIVTADIIGVANEDSRRLAAILNNAHYLENLHFTIEGRDTHYFIKLGSLEEDLVLIGNTGGRRILENGVNVTVSQMTSVLNGRTRRFADIQLQHGALCFNIRYGTTVEEEKNHVLEIARQRAVAQAWTKEQRRLQEGEEGIRAWTEGEKQQLLSTGRVQGYDGYFVLSVEQYLELSDSANNIHFMRQSEIGRR.

The disordered stretch occupies residues 1–48 (MEQTDCKPYQPLPKVKHEMDLAYTSSSDESEDGRKPRQSYNSRETLHE). The Teneurin N-terminal domain maps to 1–318 (MEQTDCKPYQ…KPYRCCNWKC (318 aa)). The Cytoplasmic portion of the chain corresponds to 1–324 (MEQTDCKPYQ…NWKCTALSAT (324 aa)). Positions 62–65 (RKRK) match the Nuclear localization signal (NLS) motif. Residue S105 is modified to Phosphoserine. Position 109 is a phosphothreonine (T109). S116 is modified (phosphoserine). The segment covering 174–189 (AGSTQDVQSSPHNQFT) has biased composition (polar residues). Residues 174–241 (AGSTQDVQSS…PAPPTSTQDS (68 aa)) form a disordered region. A compositionally biased stretch (pro residues) spans 192–201 (PLPPPPPPPH). Residues 290 to 297 (PPPRPLPR) carry the Required for interaction with SORBS1 (Ten-1 ICD form) motif. The helical transmembrane segment at 325–345 (AITVTLALLLAYVIAVHLFGL) threads the bilayer. At 346 to 2725 (TWQLQPVEGE…FMRQSEIGRR (2380 aa)) the chain is on the extracellular side. N-linked (GlcNAc...) asparagine glycosylation is present at N433. 8 EGF-like domains span residues 528 to 559 (IMDD…PDCA), 560 to 591 (RDSC…ECDV), 592 to 624 (PEEQ…EICE), 625 to 657 (EEDC…NCET), 658 to 691 (PLPV…SDCS), 692 to 721 (TELC…GPTC), 722 to 753 (EERS…DHCT), and 761 to 796 (VRDG…TGCN). 22 cysteine pairs are disulfide-bonded: C532-C542, C536-C547, C549-C558, C567-C578, C580-C589, C596-C607, C601-C612, C614-C623, C628-C639, C633-C644, C646-C655, C666-C679, C681-C690, C695-C705, C699-C710, C712-C721, C726-C736, C730-C741, C743-C752, C765-C775, C769-C784, and C786-C795. N-linked (GlcNAc...) asparagine glycosylation is found at N905 and N1084. 5 NHL repeats span residues 1194–1219 (LFAP…VRRI), 1292–1336 (SHCG…NAVI), 1351–1402 (LSCD…IAGR), 1414–1458 (FLVS…VTTN), and 1481–1524 (CFSG…ISRN). The stretch at 1534 to 1553 (YEIASPADQELYQFTVNGTH) is one YD 1 repeat. N1550 and N1567 each carry an N-linked (GlcNAc...) asparagine glycan. 4 YD repeats span residues 1570–1590 (YNSE…VHIR), 1608–1632 (YWLT…ALMT), 1633–1654 (YPGN…TVYE), and 1655–1675 (YDPE…SSFH). N-linked (GlcNAc...) asparagine glycosylation is found at N1663, N1699, N1757, N1781, and N1842. YD repeat units lie at residues 1845–1864 (YSPS…EKME), 1865–1885 (YDQS…WSYT), 1886–1904 (YLEK…YIFE), 1905–1925 (YDQP…HSLQ), 1933–1949 (YRNI…FIQD), 1950–1969 (YSRD…RRVL), 1970–1989 (YKYT…TQVT), 1992–2012 (YEES…FICT), 2015–2035 (YRQT…EGLV), 2085–2105 (YDLN…FSAN), and 2113–2133 (YEIL…VGRM). N2145 carries N-linked (GlcNAc...) asparagine glycosylation. YD repeat units lie at residues 2153–2173 (YDAD…WRYS), 2174–2194 (YDLN…LTPL), 2196–2216 (YDLR…DEDG), 2228–2248 (YNSN…TVQY), and 2250–2270 (YDGL…LQFF). The N-linked (GlcNAc...) asparagine glycan is linked to N2285. YD repeat units lie at residues 2296 to 2313 (YDLQ…GEEY) and 2314 to 2337 (YVAC…IKEI). S2580 is modified (phosphoserine). N-linked (GlcNAc...) asparagine glycosylation occurs at N2602.

Belongs to the tenascin family. Teneurin subfamily. Homodimer; disulfide-linked. Heterodimer with either TENM2 or TENM3. May also form heterodimer with TENM4. Ten-1 ICD interacts with SORBS1 (via third SH3 domain). Interacts with MBD1. Ten-1 ICD interacts with HINT1. Derives from the plasma membrane form by proteolytic processing. Further proteolytic cleavage may be generated. In terms of tissue distribution, expressed in fetal brain.

The protein resides in the cell membrane. It is found in the nucleus. It localises to the nucleus speckle. Its subcellular location is the nucleus matrix. The protein localises to the cytoplasm. The protein resides in the cytoskeleton. Its function is as follows. Involved in neural development, regulating the establishment of proper connectivity within the nervous system. May function as a cellular signal transducer. Functionally, plays a role in the regulation of neuroplasticity in the limbic system. Mediates a rapid reorganization of actin- and tubulin-based cytoskeleton elements with an increase in dendritic arborization and spine density formation of neurons in the hippocampus and amygdala. Induces BDNF transcription inhibition in neurons. Activates the mitogen-activated protein (MAP) kinase 2 (MEK2) and extracellular signal-regulated kinase (ERK) cascade. Also acts as a bioactive neuroprotective peptide on limbic neurons of the brain and regulates stress-induced behavior: attenuates alkalosis-associated necrotic cell death and the effects of corticotropin-releasing factor (CRF) on c-fos/FOS induction and on the reinstatement of cocaine seeking. In terms of biological role, induces gene transcription activation. The polypeptide is Teneurin-1 (TENM1) (Homo sapiens (Human)).